The primary structure comprises 405 residues: Sialic acid transporter NanX (405 aa).

The Cytoplasmic portion of the chain corresponds to 1–20; that stretch reads MATAWYKQVNPPQRKALFSA. Residues 21-41 form a helical membrane-spanning segment; the sequence is WLGYVFDGFDFMMIFYILHII. Residues 42 to 53 lie on the Periplasmic side of the membrane; that stretch reads KADLGITDIQAT. Residues 54 to 74 form a helical membrane-spanning segment; the sequence is LIGTVAFIARPIGGGFFGAMA. Topologically, residues 75 to 80 are cytoplasmic; sequence DKYGRK. Residues 81–101 form a helical membrane-spanning segment; that stretch reads PMMMWAIFIYSVGTGLSGIAT. Asn-102 is a topological domain (periplasmic). Residues 103 to 123 traverse the membrane as a helical segment; the sequence is LYMLAVCRFIVGLGMSGEYAC. Residues 124–139 lie on the Cytoplasmic side of the membrane; sequence ASTYAVESWPKNLQSK. A helical membrane pass occupies residues 140 to 160; sequence ASAFLVSGFSVGNIIAAQIIP. Over 161 to 164 the chain is Periplasmic; that stretch reads QFAE. A helical transmembrane segment spans residues 165–185; it reads VYGWRNSFFIGLLPVLLVLWI. Topologically, residues 186 to 214 are cytoplasmic; that stretch reads RKSAPESQEWIEDKYKDKSTFLSVFRKPH. Residues 215-235 form a helical membrane-spanning segment; the sequence is LSISMIVFLVCFCLFGANWPI. At 236–250 the chain is on the periplasmic side; it reads NGLLPSYLADNGVNT. A helical transmembrane segment spans residues 251-271; that stretch reads VVISTLMTIAGLGTLTGTIFF. Residues 272 to 282 lie on the Cytoplasmic side of the membrane; it reads GFVGDKIGVKK. A helical transmembrane segment spans residues 283–303; the sequence is AFVVGLITSFIFLCPLFFISV. The Periplasmic segment spans residues 304-307; sequence KNSS. Residues 308-328 form a helical membrane-spanning segment; sequence LIGLCLFGLMFTNLGIAGLVP. Topologically, residues 329-344 are cytoplasmic; it reads KFIYDYFPTKLRGLGT. The chain crosses the membrane as a helical span at residues 345-365; the sequence is GLIYNLGATGGMAAPVLATYI. Topologically, residues 366-371 are periplasmic; it reads SGYYGL. A helical membrane pass occupies residues 372–392; that stretch reads GVSLFIVTVAFSALLILLVGF. Topologically, residues 393 to 405 are cytoplasmic; it reads DIPGKIYKLSVAK.

The protein belongs to the major facilitator superfamily. Sugar transporter (TC 2.A.1.1) family.

The protein localises to the cell inner membrane. Its function is as follows. Probably transports across the inner membrane the two dehydrated forms of N-acetylneuraminate (Neu5Ac), 2,7-anhydro-N-acetylneuraminate (2,7-AN) and 2-deoxy-2,3-didehydro-N-acetylneuraminate (2,3-EN). The sequence is that of Sialic acid transporter NanX from Escherichia coli (strain K12).